The sequence spans 372 residues: Cytochrome b (372 aa).

4 helical membrane-spanning segments follow: residues 25 to 45 (FGSM…FLAI), 69 to 90 (WCLQ…YIHI), 105 to 125 (WMSG…GYVL), and 170 to 190 (FFAL…IHII). Residues His-75 and His-89 each contribute to the heme b site. Residues His-174 and His-188 each contribute to the heme b site. His-193 lines the a ubiquinone pocket. The next 4 helical transmembrane spans lie at 218 to 238 (YKDL…MSFS), 280 to 300 (LGGT…PFTH), 312 to 332 (MAQF…WAAS), and 339 to 358 (YITI…IINP).

The protein belongs to the cytochrome b family. As to quaternary structure, the cytochrome bc1 complex contains 3 respiratory subunits (MT-CYB, CYC1 and UQCRFS1), 2 core proteins (UQCRC1 and UQCRC2) and probably 6 low-molecular weight proteins. Heme b is required as a cofactor.

It localises to the mitochondrion inner membrane. Functionally, component of the ubiquinol-cytochrome c reductase complex (complex III or cytochrome b-c1 complex) that is part of the mitochondrial respiratory chain. The b-c1 complex mediates electron transfer from ubiquinol to cytochrome c. Contributes to the generation of a proton gradient across the mitochondrial membrane that is then used for ATP synthesis. The polypeptide is Cytochrome b (MT-CYB) (Acrochordus granulatus (Rasp-skinned water snake)).